A 288-amino-acid chain; its full sequence is 4-diphosphocytidyl-2-C-methyl-D-erythritol kinase (288 aa).

Lys-8 is an active-site residue. An ATP-binding site is contributed by 92 to 102 (PVAAGMAGGST). Residue Asp-134 is part of the active site.

It belongs to the GHMP kinase family. IspE subfamily.

It carries out the reaction 4-CDP-2-C-methyl-D-erythritol + ATP = 4-CDP-2-C-methyl-D-erythritol 2-phosphate + ADP + H(+). Its pathway is isoprenoid biosynthesis; isopentenyl diphosphate biosynthesis via DXP pathway; isopentenyl diphosphate from 1-deoxy-D-xylulose 5-phosphate: step 3/6. Its function is as follows. Catalyzes the phosphorylation of the position 2 hydroxy group of 4-diphosphocytidyl-2C-methyl-D-erythritol. The polypeptide is 4-diphosphocytidyl-2-C-methyl-D-erythritol kinase (Clostridium perfringens (strain ATCC 13124 / DSM 756 / JCM 1290 / NCIMB 6125 / NCTC 8237 / Type A)).